Reading from the N-terminus, the 344-residue chain is tRNA N6-adenosine threonylcarbamoyltransferase (344 aa).

Fe cation contacts are provided by histidine 114 and histidine 118. Residues 136–140, aspartate 170, glycine 183, aspartate 187, and asparagine 278 contribute to the substrate site; that span reads LVSGG. Residue aspartate 306 coordinates Fe cation.

It belongs to the KAE1 / TsaD family. Requires Fe(2+) as cofactor.

It is found in the cytoplasm. The catalysed reaction is L-threonylcarbamoyladenylate + adenosine(37) in tRNA = N(6)-L-threonylcarbamoyladenosine(37) in tRNA + AMP + H(+). Functionally, required for the formation of a threonylcarbamoyl group on adenosine at position 37 (t(6)A37) in tRNAs that read codons beginning with adenine. Is involved in the transfer of the threonylcarbamoyl moiety of threonylcarbamoyl-AMP (TC-AMP) to the N6 group of A37, together with TsaE and TsaB. TsaD likely plays a direct catalytic role in this reaction. The protein is tRNA N6-adenosine threonylcarbamoyltransferase of Mycobacteroides abscessus (strain ATCC 19977 / DSM 44196 / CCUG 20993 / CIP 104536 / JCM 13569 / NCTC 13031 / TMC 1543 / L948) (Mycobacterium abscessus).